The sequence spans 526 residues: MDAENKKGIGLAALVAIIVSGAIGGGVFNLSNDLATNASPGGVVISWIVIGFGILMLVLSLNHLVVNKPELSGVSDYARAGFGNMVGFISGWGYWLSAWAGNIAFAVLMMTSVDYFFPGVFQAKNGSLTILSVIVVSIVSWGLTLLVMRGVEGAAAINAIVLVAKLIPLFVFVIAGIVTFKAGVFSAHFWQNFVANTNADGVIKSLTWSNMTGGDLFSQVKGSLMVMIWVFVGIEGAAMMGDRAKRKSDAGKASIFGLIALLVIYILLSLLPFGFMSQQELANTGQPGLVHILNAMVGGWGGSLMAIGLVISLLGAWLSWTMLPVEATQQLSEQKLLPSWFGKLNDKGAPKNSLLLTQLIVQIFLIVTYFVADAYNVFVYLCTAVIMICYALVGLYLFKLGIQEKKTSNIIIGFIAAAFQILALYYSGWQFVWLSLILYAVGFILYALGKKEYGTKMSTTEVIATFILTVLGILAVFGVYGNWLGLQDALGIDGNTLLVAVVPLIVVTFIVYFVVRSDINKKGIKN.

The next 14 membrane-spanning stretches (helical) occupy residues 8-28 (GIGL…GGVF), 41-61 (GGVV…VLSL), 88-108 (FISG…FAVL), 128-148 (LTIL…LLVM), 160-180 (IVLV…IVTF), 220-240 (VKGS…AAMM), 255-275 (IFGL…PFGF), 297-317 (VGGW…LGAW), 354-374 (LLLT…VADA), 378-398 (FVYL…LYLF), 407-427 (TSNI…LYYS), 428-448 (GWQF…LYAL), 466-486 (FILT…WLGL), and 495-515 (NTLL…YFVV).

It belongs to the amino acid-polyamine-organocation (APC) superfamily. Basic amino acid/polyamine antiporter (APA) (TC 2.A.3.2) family.

The protein localises to the cell membrane. It catalyses the reaction L-ornithine(in) + L-arginine(out) = L-ornithine(out) + L-arginine(in). Catalyzes electroneutral exchange between L-arginine and L-ornithine. Can also efficiently translocate L-histidine and L-lysine. ArcD1 is the main L-arginine/L-ornithine exchanger in the arginine deiminase (ADI) pathway. This chain is Arginine/ornithine antiporter ArcD1, found in Lactococcus lactis subsp. cremoris (strain MG1363).